The sequence spans 326 residues: Polycomb complex protein BMI-1 (326 aa).

The RING-type zinc-finger motif lies at 18 to 57 (CVLCGGYFIDATTIIECLHSFCKTCIVRYLETSKYCPICD). The Nuclear localization signal motif lies at 81–95 (KLVPGLFKNEMKRRR). The segment at 162–182 (RYLRCPAAMTVMHLRKFLRSK) is interaction with PHC2. An interaction with E4F1 region spans residues 164-228 (LRCPAAMTVM…GPLPLKYRVR (65 aa)). A disordered region spans residues 236–326 (ISHQRDGLTN…VNGSSATSSG (91 aa)). 3 stretches are compositionally biased toward low complexity: residues 266-278 (PSTSSCLPSPSTP), 290-303 (SSTMNGTSSSPSGN), and 315-326 (SSVNGSSATSSG).

Component of a PRC1-like complex. Identified in a PRC1-like HPRC-H complex with CBX2, CBX4, CBX8, PHC1, PHC2, PHC3 RING1 and RNF2. Interacts with RNF2/RING2. Interacts with RING1. Part of a complex that contains RNF2, UB2D3 and BMI1, where RNF2 and BMI1 form a tight heterodimer, and UB2D3 interacts only with RNF2. The complex composed of RNF2, UB2D3 and BMI1 binds nucleosomes, and has activity only with nucleosomal histone H2A. Interacts with CBX7 and CBX8. Interacts with SPOP. Part of a complex consisting of BMI1, CUL3 and SPOP. Interacts with E4F1. Interacts with PHC2. Interacts with zinc finger protein ZNF277. May be part of a complex including at least ZNF277, BMI1 and RNF2/RING2. Post-translationally, may be polyubiquitinated; which does not lead to proteasomal degradation. Monoubiquitinated.

The protein localises to the nucleus. The protein resides in the cytoplasm. In terms of biological role, component of a Polycomb group (PcG) multiprotein PRC1-like complex, a complex class required to maintain the transcriptionally repressive state of many genes, including Hox genes, throughout development. PcG PRC1 complex acts via chromatin remodeling and modification of histones; it mediates monoubiquitination of histone H2A 'Lys-119', rendering chromatin heritably changed in its expressibility. The complex composed of RNF2, UB2D3 and BMI1 binds nucleosomes, and has activity only with nucleosomal histone H2A. In the PRC1-like complex, regulates the E3 ubiquitin-protein ligase activity of RNF2/RING2. The protein is Polycomb complex protein BMI-1 (BMI1) of Bos taurus (Bovine).